We begin with the raw amino-acid sequence, 301 residues long: Fluoroquinolones export ATP-binding protein MT2762 (301 aa).

An ABC transporter domain is found at 18-246 (IRVRGLTFRY…RSRRRVRVEY (229 aa)). 52 to 59 (GPSGAGKS) provides a ligand contact to ATP.

This sequence belongs to the ABC transporter superfamily. In terms of assembly, the complex is composed of 2 ATP-binding proteins and 2 transmembrane proteins.

The protein resides in the cell membrane. Functionally, part of the ABC transporter complex involved in fluoroquinolones export. Probably responsible for energy coupling to the transport system. This is Fluoroquinolones export ATP-binding protein MT2762 from Mycobacterium tuberculosis (strain CDC 1551 / Oshkosh).